A 432-amino-acid chain; its full sequence is Pachytene checkpoint protein 2 homolog (432 aa).

179–186 (GPPGTGKT) contacts ATP.

Belongs to the AAA ATPase family. PCH2 subfamily.

Its function is as follows. Plays a key role in chromosome recombination and chromosome structure development during meiosis. Required at early steps in meiotic recombination that leads to non-crossovers pathways. Also needed for efficient completion of homologous synapsis by influencing crossover distribution along the chromosomes affecting both crossovers and non-crossovers pathways. This chain is Pachytene checkpoint protein 2 homolog (trip13), found in Xenopus tropicalis (Western clawed frog).